Reading from the N-terminus, the 393-residue chain is Nuclear speckle splicing regulatory protein 1 homolog (393 aa).

The disordered stretch occupies residues 1–49 (MSAPPKRFGLIVKQKEEPKRAPVRVSSVFGDDDDDEAPATATNTSSASV). Over residues 39–48 (ATATNTSSAS) the composition is skewed to low complexity. Residues 76–166 (NYDEIQAIKN…YREQEAEEAA (91 aa)) adopt a coiled-coil conformation. A disordered region spans residues 187–350 (LLNDLARDPT…SLKDKLKPKR (164 aa)). The span at 199–209 (KQRKMEKKNVR) shows a compositional bias: basic residues. 4 stretches are compositionally biased toward basic and acidic residues: residues 222–236 (EDVKKKEEPKKKSIY), 243–261 (DEKKSKAPEAPKKNFEGEL), 317–333 (DHAQRNQREKTKSKSPE), and 341–350 (SLKDKLKPKR).

It belongs to the NSRP1 family.

The polypeptide is Nuclear speckle splicing regulatory protein 1 homolog (Caenorhabditis briggsae).